Reading from the N-terminus, the 281-residue chain is GDT1-like protein 4 (281 aa).

The signal sequence occupies residues 1-22 (MARRVSTTRLLLLLLLVAAAAA). 6 helical membrane-spanning segments follow: residues 66-86 (AGLGLFDAFFASLSMILVSEI), 105-125 (TVLSGALSALVVMTILSTGLG), 137-157 (TNSAATVLYAFFGLRLLYIAW), 188-208 (IFSRFCTPIFLESFVLTFLAE), 226-246 (AVGVAVGATLGHTICTSFAVV), and 258-278 (GTVATIGGLLFLGFSLSSYFY).

This sequence belongs to the GDT1 family.

The protein localises to the membrane. This chain is GDT1-like protein 4, found in Oryza sativa subsp. indica (Rice).